Here is a 38-residue protein sequence, read N- to C-terminus: Large ribosomal subunit protein bL36 (38 aa).

The protein belongs to the bacterial ribosomal protein bL36 family.

This chain is Large ribosomal subunit protein bL36, found in Pseudomonas entomophila (strain L48).